A 491-amino-acid chain; its full sequence is Probable aspartyl aminopeptidase (491 aa).

His-90 contributes to the Zn(2+) binding site. Substrate is bound at residue His-168. Asp-278 provides a ligand contact to Zn(2+). Glu-315 contributes to the substrate binding site. Glu-316 and Asp-361 together coordinate Zn(2+). Substrate contacts are provided by Asp-361, His-364, Lys-389, and Tyr-396. His-455 lines the Zn(2+) pocket.

This sequence belongs to the peptidase M18 family. As to quaternary structure, tetrahedron-shaped homododecamer built from six homodimers. Zn(2+) serves as cofactor.

The protein resides in the cytoplasm. It catalyses the reaction Release of an N-terminal aspartate or glutamate from a peptide, with a preference for aspartate.. Its function is as follows. Likely to play an important role in intracellular protein and peptide metabolism. The sequence is that of Probable aspartyl aminopeptidase from Ricinus communis (Castor bean).